Reading from the N-terminus, the 132-residue chain is Replication enhancer protein (132 aa).

It belongs to the geminiviridae replication enhancer protein family. In terms of assembly, homooligomer. Interacts with the replication-associated protein (REP). Interacts with host proliferating cell nuclear antigen (PCNA). Interacts with host retinoblastoma-related protein 1 (RBR1), and may thereby deregulate the host cell cycle. Oligomerization and interaction with PCNA are necessary for optimal replication enhancement.

Functionally, increases viral DNA accumulation. Enhances infectivity and symptom expression. The polypeptide is Replication enhancer protein (Potato yellow mosaic virus (isolate Venezuela) (PYMV)).